We begin with the raw amino-acid sequence, 865 residues long: Serine/threonine-protein kinase greatwall (865 aa).

Met1 carries the post-translational modification N-acetylmethionine. In terms of domain architecture, Protein kinase spans Phe34–Phe821. Residues Ile40 to Val48 and Lys61 contribute to the ATP site. The Proton acceptor role is filled by Asp155. A phosphothreonine mark is found at Thr206 and Thr221. Ser362 and Ser442 each carry phosphoserine. Thr508 carries the post-translational modification Phosphothreonine. 4 positions are modified to phosphoserine: Ser545, Ser619, Ser644, and Ser655. Thr708 is modified (phosphothreonine). Ser711 carries the post-translational modification Phosphoserine. Thr727 carries the phosphothreonine; by CDK1 modification. The AGC-kinase C-terminal domain maps to Ser822–Leu865. Ser861 and Ser864 each carry phosphoserine.

It belongs to the protein kinase superfamily. AGC Ser/Thr protein kinase family. Post-translationally, phosphorylation at Thr-727 by CDK1 during M phase activates its kinase activity. Maximum phosphorylation occurs in prometaphase.

The protein localises to the cytoplasm. It localises to the cytoskeleton. It is found in the microtubule organizing center. The protein resides in the centrosome. Its subcellular location is the nucleus. The catalysed reaction is L-seryl-[protein] + ATP = O-phospho-L-seryl-[protein] + ADP + H(+). It carries out the reaction L-threonyl-[protein] + ATP = O-phospho-L-threonyl-[protein] + ADP + H(+). Serine/threonine kinase that plays a key role in M phase by acting as a regulator of mitosis entry and maintenance. Acts by promoting the inactivation of protein phosphatase 2A (PP2A) during M phase: does not directly inhibit PP2A but acts by mediating phosphorylation and subsequent activation of ARPP19 and ENSA at 'Ser-62' and 'Ser-67', respectively. ARPP19 and ENSA are phosphatase inhibitors that specifically inhibit the PPP2R2D (PR55-delta) subunit of PP2A. Inactivation of PP2A during M phase is essential to keep cyclin-B1-CDK1 activity high. Following DNA damage, it is also involved in checkpoint recovery by being inhibited. The protein is Serine/threonine-protein kinase greatwall (Mastl) of Mus musculus (Mouse).